A 167-amino-acid chain; its full sequence is 3-isopropylmalate dehydratase small subunit (167 aa).

This sequence belongs to the LeuD family. LeuD type 2 subfamily. As to quaternary structure, heterodimer of LeuC and LeuD.

It catalyses the reaction (2R,3S)-3-isopropylmalate = (2S)-2-isopropylmalate. It participates in amino-acid biosynthesis; L-leucine biosynthesis; L-leucine from 3-methyl-2-oxobutanoate: step 2/4. Its function is as follows. Catalyzes the isomerization between 2-isopropylmalate and 3-isopropylmalate, via the formation of 2-isopropylmaleate. This is 3-isopropylmalate dehydratase small subunit from Nitratidesulfovibrio vulgaris (strain ATCC 29579 / DSM 644 / CCUG 34227 / NCIMB 8303 / VKM B-1760 / Hildenborough) (Desulfovibrio vulgaris).